The primary structure comprises 309 residues: Pantothenate kinase (309 aa).

Position 92-99 (92-99 (GSVAVGKS)) interacts with ATP.

This sequence belongs to the prokaryotic pantothenate kinase family.

It is found in the cytoplasm. It carries out the reaction (R)-pantothenate + ATP = (R)-4'-phosphopantothenate + ADP + H(+). It functions in the pathway cofactor biosynthesis; coenzyme A biosynthesis; CoA from (R)-pantothenate: step 1/5. This Latilactobacillus sakei subsp. sakei (strain 23K) (Lactobacillus sakei subsp. sakei) protein is Pantothenate kinase.